A 285-amino-acid polypeptide reads, in one-letter code: 4-hydroxybenzoate octaprenyltransferase (285 aa).

Transmembrane regions (helical) follow at residues 28–48, 86–106, 110–130, 133–153, 160–180, 207–227, 232–252, and 262–284; these read LWALWMAAGGPPALSVFCIFF, IAAWEAVLIAAVLALIAFALI, NSLTKWLAVVAAVVAGTYPFF, FFAIPQAYLGIAFGFGIPMAF, VPLVAWVMLLANVFWAVAYDT, VAAIMLCYAAFLVLMGWAGVM, WPYWVGLAAAAVCAGYHYTLI, and AAFRHNNWLGACVFAGTAVAYAI.

It belongs to the UbiA prenyltransferase family. It depends on Mg(2+) as a cofactor.

It is found in the cell inner membrane. It catalyses the reaction all-trans-octaprenyl diphosphate + 4-hydroxybenzoate = 4-hydroxy-3-(all-trans-octaprenyl)benzoate + diphosphate. The protein operates within cofactor biosynthesis; ubiquinone biosynthesis. Functionally, catalyzes the prenylation of para-hydroxybenzoate (PHB) with an all-trans polyprenyl group. Mediates the second step in the final reaction sequence of ubiquinone-8 (UQ-8) biosynthesis, which is the condensation of the polyisoprenoid side chain with PHB, generating the first membrane-bound Q intermediate 3-octaprenyl-4-hydroxybenzoate. The sequence is that of 4-hydroxybenzoate octaprenyltransferase from Cupriavidus pinatubonensis (strain JMP 134 / LMG 1197) (Cupriavidus necator (strain JMP 134)).